The primary structure comprises 286 residues: 4-diphosphocytidyl-2-C-methyl-D-erythritol kinase (286 aa).

Lysine 11 is a catalytic residue. 94 to 104 (PMGGGIGGGSS) serves as a coordination point for ATP. Aspartate 136 is a catalytic residue.

The protein belongs to the GHMP kinase family. IspE subfamily.

The catalysed reaction is 4-CDP-2-C-methyl-D-erythritol + ATP = 4-CDP-2-C-methyl-D-erythritol 2-phosphate + ADP + H(+). The protein operates within isoprenoid biosynthesis; isopentenyl diphosphate biosynthesis via DXP pathway; isopentenyl diphosphate from 1-deoxy-D-xylulose 5-phosphate: step 3/6. Its function is as follows. Catalyzes the phosphorylation of the position 2 hydroxy group of 4-diphosphocytidyl-2C-methyl-D-erythritol. The protein is 4-diphosphocytidyl-2-C-methyl-D-erythritol kinase of Pseudomonas putida (strain ATCC 47054 / DSM 6125 / CFBP 8728 / NCIMB 11950 / KT2440).